A 330-amino-acid polypeptide reads, in one-letter code: Aspartate--ammonia ligase (330 aa).

The protein belongs to the class-II aminoacyl-tRNA synthetase family. AsnA subfamily.

The protein localises to the cytoplasm. The enzyme catalyses L-aspartate + NH4(+) + ATP = L-asparagine + AMP + diphosphate + H(+). It functions in the pathway amino-acid biosynthesis; L-asparagine biosynthesis; L-asparagine from L-aspartate (ammonia route): step 1/1. This Actinobacillus succinogenes (strain ATCC 55618 / DSM 22257 / CCUG 43843 / 130Z) protein is Aspartate--ammonia ligase.